The primary structure comprises 401 residues: Deubiquitinase and deneddylase Dub1 (401 aa).

Over residues 1–11 the composition is skewed to polar residues; the sequence is MLSPTNSTSKT. Positions 1–24 are disordered; the sequence is MLSPTNSTSKTAPVPPRDSSKPVL. A helical membrane pass occupies residues 40-60; the sequence is TALAVLLVVVTLGLILLFYSF. The disordered stretch occupies residues 77-130; the sequence is KEQPTISIPVPLPSPPLAVPRPSTPPPPVISRPSTPSAPKPSTPPPLLPKAPKP. The segment covering 86–128 has biased composition (pro residues); it reads VPLPSPPLAVPRPSTPPPPVISRPSTPSAPKPSTPPPLLPKAP. Residues histidine 275, aspartate 292, and cysteine 345 contribute to the active site.

The protein belongs to the peptidase C48 family. As to quaternary structure, binds to host NFKBIA.

It is found in the secreted. The protein localises to the host cell. It localises to the membrane. In terms of biological role, effector proteins function to alter host cell physiology and promote bacterial survival in host tissues. This protease possesses deubiquitinating and deneddylating activities. Impairs ubiquitination and degradation of NF-kappa-B inhibitor alpha (NFKBIA), thereby preventing NF-kappa-B activation. This Chlamydia trachomatis serovar L2 (strain ATCC VR-902B / DSM 19102 / 434/Bu) protein is Deubiquitinase and deneddylase Dub1 (cdu1).